A 214-amino-acid polypeptide reads, in one-letter code: Methyltransferase HEMK2 (214 aa).

S-adenosyl-L-methionine contacts are provided by threonine 29, glutamate 51, glycine 53, aspartate 77, aspartate 103, leucine 104, and asparagine 122. An a protein-binding site is contributed by asparagine 122.

Belongs to the eukaryotic/archaeal PrmC-related family. In terms of assembly, heterodimer; heterodimerization with TRMT112 is required for S-adenosyl-L-methionine-binding. Post-translationally, ubiquitinated, leading to its degradation by the proteasome. As to expression, highly expressed in undifferentiated embryonic stem cells (at protein level). Also expressed in testis and brain, weakly expressed in differentiated embryonic stem cells and kidney. Not expressed in muscle, heart, placenta, pancreas, lung and stomach.

It is found in the nucleus. It catalyses the reaction L-lysyl-[histone] + S-adenosyl-L-methionine = N(6)-methyl-L-lysyl-[histone] + S-adenosyl-L-homocysteine + H(+). The catalysed reaction is L-glutaminyl-[protein] + S-adenosyl-L-methionine = N(5)-methyl-L-glutaminyl-[protein] + S-adenosyl-L-homocysteine + H(+). The enzyme catalyses methylarsonous acid + S-adenosyl-L-methionine = dimethylarsinate + S-adenosyl-L-homocysteine + 2 H(+). Methyltransferase that can methylate proteins and, to a lower extent, arsenic. Catalytic subunit of a heterodimer with TRMT112, which monomethylates 'Lys-12' of histone H4 (H4K12me1), a modification present at the promoters of numerous genes encoding cell cycle regulators. Catalytic subunit of a heterodimer with TRMT112, which catalyzes N5-methylation of Glu residue of proteins with a Gly-Gln-Xaa-Xaa-Xaa-Arg motif. Methylates ETF1 on 'Gln-185'; ETF1 needs to be complexed to ERF3 in its GTP-bound form to be efficiently methylated. May also play a role in the modulation of arsenic-induced toxicity by mediating the conversion of monomethylarsonous acid (3+) into the less toxic dimethylarsonic acid. It however only plays a limited role in arsenic metabolism compared with AS3MT. This chain is Methyltransferase HEMK2, found in Mus musculus (Mouse).